The primary structure comprises 122 residues: Large ribosomal subunit protein uL14 (122 aa).

This sequence belongs to the universal ribosomal protein uL14 family. As to quaternary structure, part of the 50S ribosomal subunit. Forms a cluster with proteins L3 and L19. In the 70S ribosome, L14 and L19 interact and together make contacts with the 16S rRNA in bridges B5 and B8.

Functionally, binds to 23S rRNA. Forms part of two intersubunit bridges in the 70S ribosome. The protein is Large ribosomal subunit protein uL14 of Bifidobacterium longum (strain DJO10A).